We begin with the raw amino-acid sequence, 543 residues long: Glucose-6-phosphate isomerase (543 aa).

Residue Glu353 is the Proton donor of the active site. Residues His384 and Lys504 contribute to the active site.

Belongs to the GPI family.

It is found in the cytoplasm. The enzyme catalyses alpha-D-glucose 6-phosphate = beta-D-fructose 6-phosphate. Its pathway is carbohydrate biosynthesis; gluconeogenesis. It functions in the pathway carbohydrate degradation; glycolysis; D-glyceraldehyde 3-phosphate and glycerone phosphate from D-glucose: step 2/4. In terms of biological role, catalyzes the reversible isomerization of glucose-6-phosphate to fructose-6-phosphate. In Roseiflexus castenholzii (strain DSM 13941 / HLO8), this protein is Glucose-6-phosphate isomerase.